We begin with the raw amino-acid sequence, 132 residues long: Small ribosomal subunit protein uS8 (132 aa).

It belongs to the universal ribosomal protein uS8 family. As to quaternary structure, part of the 30S ribosomal subunit. Contacts proteins S5 and S12.

Its function is as follows. One of the primary rRNA binding proteins, it binds directly to 16S rRNA central domain where it helps coordinate assembly of the platform of the 30S subunit. In Sinorhizobium fredii (strain NBRC 101917 / NGR234), this protein is Small ribosomal subunit protein uS8.